The sequence spans 1414 residues: DNA-directed RNA polymerase subunit beta' (1414 aa).

Positions 70, 72, 85, and 88 each coordinate Zn(2+). Aspartate 460, aspartate 462, and aspartate 464 together coordinate Mg(2+). Cysteine 819, cysteine 893, cysteine 900, and cysteine 903 together coordinate Zn(2+). The interval 1391-1414 is disordered; that stretch reads AEEAFDFGTPSAPAEEPQQHPAAE. The segment covering 1400-1414 has biased composition (low complexity); the sequence is PSAPAEEPQQHPAAE.

This sequence belongs to the RNA polymerase beta' chain family. In terms of assembly, the RNAP catalytic core consists of 2 alpha, 1 beta, 1 beta' and 1 omega subunit. When a sigma factor is associated with the core the holoenzyme is formed, which can initiate transcription. Requires Mg(2+) as cofactor. Zn(2+) is required as a cofactor.

The enzyme catalyses RNA(n) + a ribonucleoside 5'-triphosphate = RNA(n+1) + diphosphate. Its function is as follows. DNA-dependent RNA polymerase catalyzes the transcription of DNA into RNA using the four ribonucleoside triphosphates as substrates. This chain is DNA-directed RNA polymerase subunit beta', found in Burkholderia lata (strain ATCC 17760 / DSM 23089 / LMG 22485 / NCIMB 9086 / R18194 / 383).